The sequence spans 307 residues: Ribosomal RNA small subunit methyltransferase H (307 aa).

Residues Gly33–Tyr35, Asp51, Phe82, Asp96, and Gln103 each bind S-adenosyl-L-methionine.

The protein belongs to the methyltransferase superfamily. RsmH family.

It is found in the cytoplasm. The enzyme catalyses cytidine(1402) in 16S rRNA + S-adenosyl-L-methionine = N(4)-methylcytidine(1402) in 16S rRNA + S-adenosyl-L-homocysteine + H(+). In terms of biological role, specifically methylates the N4 position of cytidine in position 1402 (C1402) of 16S rRNA. This is Ribosomal RNA small subunit methyltransferase H from Rickettsia massiliae (strain Mtu5).